A 199-amino-acid polypeptide reads, in one-letter code: NADH-quinone oxidoreductase subunit C (199 aa).

It belongs to the complex I 30 kDa subunit family. NDH-1 is composed of 14 different subunits. Subunits NuoB, C, D, E, F, and G constitute the peripheral sector of the complex.

It is found in the cell inner membrane. The enzyme catalyses a quinone + NADH + 5 H(+)(in) = a quinol + NAD(+) + 4 H(+)(out). In terms of biological role, NDH-1 shuttles electrons from NADH, via FMN and iron-sulfur (Fe-S) centers, to quinones in the respiratory chain. The immediate electron acceptor for the enzyme in this species is believed to be ubiquinone. Couples the redox reaction to proton translocation (for every two electrons transferred, four hydrogen ions are translocated across the cytoplasmic membrane), and thus conserves the redox energy in a proton gradient. The chain is NADH-quinone oxidoreductase subunit C from Leptothrix cholodnii (strain ATCC 51168 / LMG 8142 / SP-6) (Leptothrix discophora (strain SP-6)).